A 126-amino-acid chain; its full sequence is Histone H2B type 1-O (126 aa).

The span at 1-12 (MPDPAKSAPAPK) shows a compositional bias: low complexity. A disordered region spans residues 1–35 (MPDPAKSAPAPKKGSKKAVTKAQKKDGKKRKRSRK). An N-acetylproline; partial modification is found at Pro-2. N6-(2-hydroxyisobutyryl)lysine; alternate is present on Lys-6. Lys-6 bears the N6-(beta-hydroxybutyryl)lysine; alternate mark. At Lys-6 the chain carries N6-acetyllysine; alternate. At Lys-6 the chain carries N6-butyryllysine; alternate. N6-crotonyllysine; alternate is present on Lys-6. Lys-6 carries the post-translational modification N6-lactoyllysine; alternate. Lys-6 participates in a covalent cross-link: Glycyl lysine isopeptide (Lys-Gly) (interchain with G-Cter in SUMO2); alternate. Ser-7 carries the post-translational modification ADP-ribosylserine. Position 12 is an N6-(beta-hydroxybutyryl)lysine; alternate (Lys-12). Lys-12 and Lys-13 each carry N6-acetyllysine; alternate. 2 positions are modified to N6-crotonyllysine; alternate: Lys-12 and Lys-13. Lys-12 carries the N6-lactoyllysine; alternate modification. N6-(2-hydroxyisobutyryl)lysine; alternate is present on Lys-13. Ser-15 carries the phosphoserine; by STK4/MST1 modification. Residues Lys-16, Lys-17, Lys-21, and Lys-24 each carry the N6-acetyllysine; alternate modification. An N6-crotonyllysine; alternate mark is found at Lys-16, Lys-17, Lys-21, and Lys-24. N6-lactoyllysine; alternate occurs at positions 16, 17, 21, and 24. N6-(beta-hydroxybutyryl)lysine; alternate occurs at positions 17 and 21. Lys-17 carries the N6-glutaryllysine; alternate modification. N6-(2-hydroxyisobutyryl)lysine; alternate occurs at positions 21 and 24. An N6-butyryllysine; alternate modification is found at Lys-21. Lys-21 participates in a covalent cross-link: Glycyl lysine isopeptide (Lys-Gly) (interchain with G-Cter in SUMO2); alternate. Lys-25 carries the post-translational modification N6-(2-hydroxyisobutyryl)lysine. Position 35 is an N6-(2-hydroxyisobutyryl)lysine; alternate (Lys-35). Residue Lys-35 is modified to N6-(beta-hydroxybutyryl)lysine; alternate. Residue Lys-35 is modified to N6-crotonyllysine; alternate. Position 35 is an N6-glutaryllysine; alternate (Lys-35). Lys-35 is subject to N6-succinyllysine; alternate. A Glycyl lysine isopeptide (Lys-Gly) (interchain with G-Cter in ubiquitin); alternate cross-link involves residue Lys-35. Position 36 is a polyADP-ribosyl glutamic acid (Glu-36). The residue at position 37 (Ser-37) is a Phosphoserine; by AMPK. An N6-(2-hydroxyisobutyryl)lysine; alternate mark is found at Lys-44, Lys-47, and Lys-58. Lys-44 carries the post-translational modification N6-lactoyllysine; alternate. N6-glutaryllysine; alternate is present on residues Lys-44 and Lys-47. Position 47 is an N6-methyllysine; alternate (Lys-47). Lys-58 is subject to N6,N6-dimethyllysine; alternate. Arg-80 is modified (dimethylated arginine). The residue at position 86 (Lys-86) is an N6-(2-hydroxyisobutyryl)lysine; alternate. Lys-86 is subject to N6-(beta-hydroxybutyryl)lysine; alternate. An N6-acetyllysine; alternate modification is found at Lys-86. Lys-86 carries the N6-lactoyllysine; alternate modification. Residue Lys-86 is modified to N6,N6,N6-trimethyllysine; alternate. 2 positions are modified to omega-N-methylarginine: Arg-87 and Arg-93. Residue Lys-109 is modified to N6-(2-hydroxyisobutyryl)lysine; alternate. An N6-lactoyllysine; alternate modification is found at Lys-109. N6-glutaryllysine; alternate is present on Lys-109. An N6-methyllysine; alternate modification is found at Lys-109. A glycan (O-linked (GlcNAc) serine) is linked at Ser-113. Thr-116 is modified (phosphothreonine). 2 positions are modified to N6-(2-hydroxyisobutyryl)lysine; alternate: Lys-117 and Lys-121. N6-(beta-hydroxybutyryl)lysine; alternate occurs at positions 117 and 121. N6-lactoyllysine; alternate occurs at positions 117 and 121. N6-glutaryllysine; alternate is present on residues Lys-117 and Lys-121. Lys-117 and Lys-121 each carry N6-succinyllysine; alternate. The residue at position 117 (Lys-117) is an N6-malonyllysine; alternate. An N6-methylated lysine; alternate modification is found at Lys-117. Lys-121 is covalently cross-linked (Glycyl lysine isopeptide (Lys-Gly) (interchain with G-Cter in ubiquitin); alternate).

Belongs to the histone H2B family. As to quaternary structure, the nucleosome is a histone octamer containing two molecules each of H2A, H2B, H3 and H4 assembled in one H3-H4 heterotetramer and two H2A-H2B heterodimers. The octamer wraps approximately 147 bp of DNA. Monoubiquitination at Lys-35 (H2BK34Ub) by the MSL1/MSL2 dimer is required for histone H3 'Lys-4' (H3K4me) and 'Lys-79' (H3K79me) methylation and transcription activation at specific gene loci, such as HOXA9 and MEIS1 loci. Similarly, monoubiquitination at Lys-121 (H2BK120Ub) by the RNF20/40 complex gives a specific tag for epigenetic transcriptional activation and is also prerequisite for histone H3 'Lys-4' and 'Lys-79' methylation. It also functions cooperatively with the FACT dimer to stimulate elongation by RNA polymerase II. H2BK120Ub also acts as a regulator of mRNA splicing: deubiquitination by USP49 is required for efficient cotranscriptional splicing of a large set of exons. In terms of processing, phosphorylation at Ser-37 (H2BS36ph) by AMPK in response to stress promotes transcription. Phosphorylated on Ser-15 (H2BS14ph) by STK4/MST1 during apoptosis; which facilitates apoptotic chromatin condensation. Also phosphorylated on Ser-15 in response to DNA double strand breaks (DSBs), and in correlation with somatic hypermutation and immunoglobulin class-switch recombination. Post-translationally, glcNAcylation at Ser-113 promotes monoubiquitination of Lys-121. It fluctuates in response to extracellular glucose, and associates with transcribed genes. ADP-ribosylated by PARP1 or PARP2 on Ser-7 (H2BS6ADPr) in response to DNA damage. H2BS6ADPr promotes recruitment of CHD1L. Poly ADP-ribosylation on Glu-36 (H2BE35ADPr) by PARP1 regulates adipogenesis: it inhibits phosphorylation at Ser-37 (H2BS36ph), thereby blocking expression of pro-adipogenetic genes. In terms of processing, crotonylation (Kcr) is specifically present in male germ cells and marks testis-specific genes in post-meiotic cells, including X-linked genes that escape sex chromosome inactivation in haploid cells. Crotonylation marks active promoters and enhancers and confers resistance to transcriptional repressors. It is also associated with post-meiotically activated genes on autosomes. Post-translationally, lactylated in macrophages by EP300/P300 by using lactoyl-CoA directly derived from endogenous or exogenous lactate, leading to stimulates gene transcription.

The protein resides in the nucleus. Its subcellular location is the chromosome. Core component of nucleosome. Nucleosomes wrap and compact DNA into chromatin, limiting DNA accessibility to the cellular machineries which require DNA as a template. Histones thereby play a central role in transcription regulation, DNA repair, DNA replication and chromosomal stability. DNA accessibility is regulated via a complex set of post-translational modifications of histones, also called histone code, and nucleosome remodeling. This chain is Histone H2B type 1-O, found in Homo sapiens (Human).